We begin with the raw amino-acid sequence, 1227 residues long: Anion exchange protein 3 (1227 aa).

A compositionally biased stretch (pro residues) spans 1-11 (MANGVIPPPGG). Disordered stretches follow at residues 1-256 (MANG…DEAE), 286-312 (KPSR…KKKK), and 428-497 (NDDK…GDGH). Over 1 to 707 (MANGVIPPPG…DLRDALHSQC (707 aa)) the chain is Cytoplasmic. Over residues 58 to 75 (DPEKPSRSYSERDFEFHR) the composition is skewed to basic and acidic residues. Composition is skewed to basic residues over residues 76–97 (HTSH…KLRR) and 104–113 (RHTRRKRKKE). A compositionally biased stretch (acidic residues) spans 134–152 (AEEEEEEEEEEEGESEAEP). 4 positions are modified to phosphoserine: Ser167, Ser170, Ser175, and Ser198. Low complexity predominate over residues 194–215 (QSDQSPQRSGSSPSPRARASRI). An Omega-N-methylarginine modification is found at Arg294. Over residues 435–448 (FFPRNPSSSSVNSV) the composition is skewed to low complexity. Residues 480–497 (HDPDAKEKPLHMPGGDGH) show a composition bias toward basic and acidic residues. 4 consecutive transmembrane segments (helical) span residues 708-730 (VAAV…GLLG), 736-773 (LMGV…LLVF), 793-815 (VWVG…SFLV), and 825-846 (IFAF…YKVF). A membrane (anion exchange) region spans residues 708-1227 (VAAVLFIYFA…DEYNELHMPV (520 aa)). N-linked (GlcNAc...) asparagine glycosylation is present at Asn868. The helical transmembrane segment at 888–905 (ALLSLILMLGTFLIAFFL) threads the bilayer. At 906-920 (RKFRNSRFLGGKARR) the chain is on the cytoplasmic side. 5 helical membrane-spanning segments follow: residues 921–941 (IIGD…DYSI), 975–997 (PFPP…LIFM), 1023–1044 (LLLI…LTAA), 1078–1123 (VTGV…IQLS), and 1150–1186 (MHLF…TVPL). Cys1160 carries S-palmitoyl cysteine lipidation.

The protein belongs to the anion exchanger (TC 2.A.31) family. In terms of tissue distribution, expressed in the brain.

It localises to the cell membrane. It catalyses the reaction hydrogencarbonate(in) + chloride(out) = hydrogencarbonate(out) + chloride(in). Inhibited by 4,4'-diisothiocyanatostilbene-2,2'-disulfonic acid (DIDS). Sodium-independent anion exchanger which mediates the electroneutral exchange of chloride for bicarbonate ions across the cell membrane. May be involved in the regulation of intracellular pH, and the modulation of cardiac action potential. This chain is Anion exchange protein 3 (Slc4a3), found in Mus musculus (Mouse).